The following is a 334-amino-acid chain: Ventral anterior homeobox 1 (334 aa).

Basic and acidic residues predominate over residues Met-1–Gly-34. The interval Met-1 to Ala-41 is disordered. Residues Pro-100–Gln-159 constitute a DNA-binding region (homeobox). Disordered regions lie at residues Pro-234–Ala-263 and Ser-314–Asp-334. Over residues Asn-323–Asp-334 the composition is skewed to basic and acidic residues.

This sequence belongs to the EMX homeobox family.

The protein resides in the nucleus. Its function is as follows. Transcription factor that may function in dorsoventral specification of the forebrain. Required for axon guidance and major tract formation in the developing forebrain. May contribute to the differentiation of the neuroretina, pigmented epithelium and optic stalk. This Homo sapiens (Human) protein is Ventral anterior homeobox 1 (VAX1).